Here is a 390-residue protein sequence, read N- to C-terminus: Nucleotide-sugar uncharacterized transporter 1 (390 aa).

10 consecutive transmembrane segments (helical) span residues 61-81 (ICGPTVALTFNFVVAISIIFM), 89-109 (IGFEFPVFLTFIHYIVAYLLM), 128-148 (SLLPLYTLGIVMSLSTGLANV), 155-175 (VGFYQMAKIAVTPSIVFAEFL), 182-201 (SFMKVVSLTVVSVGVAVATV), 206-228 (FSLFGACVAFAWIIPSATNKILW), 249-269 (ITLLFLVSMIPFLDPPGALSF), 278-298 (AILVSALLGFFLQWSGALALG), 306-326 (VVLGQFKTCVLLLGNYYIFGS), and 329-349 (GFISVGGAFVAIMGTSLYTYL). Residues 356 to 365 (LKTSSSSSAL) show a composition bias toward low complexity. Residues 356-390 (LKTSSSSSALSEKKSRFSDLKDDDKNLEPYGSEAV) are disordered. The span at 366 to 382 (SEKKSRFSDLKDDDKNL) shows a compositional bias: basic and acidic residues.

This sequence belongs to the TPT transporter family. TPT (TC 2.A.7.9) subfamily.

Its subcellular location is the membrane. The chain is Nucleotide-sugar uncharacterized transporter 1 from Arabidopsis thaliana (Mouse-ear cress).